The following is a 194-amino-acid chain: MNNEEKKVNEEIVVEDQIEAIGTEADVEWNESMEESQDAKIAELEAALLASQAQLKEQQDAVLRAKAEEQNVRRRAEGDIDKARKYALKKFAGELLPVIDNLERALESGDKENEAAKVLLEGVELTLQTFISTIEKFGLTVINPVGETFNPEHHQAIGMQASPDHESNTVMVVMQKGYSLNEQVIRPAMVMVAQ.

Belongs to the GrpE family. Homodimer.

It is found in the cytoplasm. Functionally, participates actively in the response to hyperosmotic and heat shock by preventing the aggregation of stress-denatured proteins, in association with DnaK and GrpE. It is the nucleotide exchange factor for DnaK and may function as a thermosensor. Unfolded proteins bind initially to DnaJ; upon interaction with the DnaJ-bound protein, DnaK hydrolyzes its bound ATP, resulting in the formation of a stable complex. GrpE releases ADP from DnaK; ATP binding to DnaK triggers the release of the substrate protein, thus completing the reaction cycle. Several rounds of ATP-dependent interactions between DnaJ, DnaK and GrpE are required for fully efficient folding. This chain is Protein GrpE, found in Aliivibrio salmonicida (strain LFI1238) (Vibrio salmonicida (strain LFI1238)).